Consider the following 106-residue polypeptide: UPF0060 membrane protein Smed_0659 (106 aa).

The next 3 helical transmembrane spans lie at 4–24, 31–51, and 61–81; these read FAIY…FWAW, GLWL…LTMV, and AAYG…AEGA.

Belongs to the UPF0060 family.

Its subcellular location is the cell inner membrane. This is UPF0060 membrane protein Smed_0659 from Sinorhizobium medicae (strain WSM419) (Ensifer medicae).